Reading from the N-terminus, the 116-residue chain is NADPH-dependent 7-cyano-7-deazaguanine reductase (116 aa).

C31 (thioimide intermediate) is an active-site residue. The Proton donor role is filled by D38. Substrate contacts are provided by residues 53 to 55 and 72 to 73; these read VEL and YE.

This sequence belongs to the GTP cyclohydrolase I family. QueF type 1 subfamily.

It is found in the cytoplasm. The catalysed reaction is 7-aminomethyl-7-carbaguanine + 2 NADP(+) = 7-cyano-7-deazaguanine + 2 NADPH + 3 H(+). Its pathway is tRNA modification; tRNA-queuosine biosynthesis. In terms of biological role, catalyzes the NADPH-dependent reduction of 7-cyano-7-deazaguanine (preQ0) to 7-aminomethyl-7-deazaguanine (preQ1). The protein is NADPH-dependent 7-cyano-7-deazaguanine reductase of Chloroherpeton thalassium (strain ATCC 35110 / GB-78).